We begin with the raw amino-acid sequence, 150 residues long: Transcriptional repressor NrdR (150 aa).

A zinc finger spans residues 3–34 (CPFCGQLDSKVVDSRPDKGGAAIRRRRECESC). One can recognise an ATP-cone domain in the interval 49–139 (PLVLKKDGRR…VYRSFKDVNE (91 aa)).

The protein belongs to the NrdR family. Requires Zn(2+) as cofactor.

Its function is as follows. Negatively regulates transcription of bacterial ribonucleotide reductase nrd genes and operons by binding to NrdR-boxes. This is Transcriptional repressor NrdR from Geobacter sulfurreducens (strain ATCC 51573 / DSM 12127 / PCA).